Reading from the N-terminus, the 199-residue chain is Holliday junction branch migration complex subunit RuvA (199 aa).

Positions 1-64 are domain I; the sequence is MIALLTGKLA…EDAINLYGFR (64 aa). The segment at 65–143 is domain II; the sequence is TMEEKEMFQL…KLGHGPLQQD (79 aa). Residues 144–148 form a flexible linker region; that stretch reads VAPAD. Residues 149 to 199 form a domain III region; that stretch reads AHNDMRDDVVSALVNLGYKEAVVQKTVDEIGVAADATVESLLKQALKKLMK.

The protein belongs to the RuvA family. As to quaternary structure, homotetramer. Forms an RuvA(8)-RuvB(12)-Holliday junction (HJ) complex. HJ DNA is sandwiched between 2 RuvA tetramers; dsDNA enters through RuvA and exits via RuvB. An RuvB hexamer assembles on each DNA strand where it exits the tetramer. Each RuvB hexamer is contacted by two RuvA subunits (via domain III) on 2 adjacent RuvB subunits; this complex drives branch migration. In the full resolvosome a probable DNA-RuvA(4)-RuvB(12)-RuvC(2) complex forms which resolves the HJ.

The protein localises to the cytoplasm. The RuvA-RuvB-RuvC complex processes Holliday junction (HJ) DNA during genetic recombination and DNA repair, while the RuvA-RuvB complex plays an important role in the rescue of blocked DNA replication forks via replication fork reversal (RFR). RuvA specifically binds to HJ cruciform DNA, conferring on it an open structure. The RuvB hexamer acts as an ATP-dependent pump, pulling dsDNA into and through the RuvAB complex. HJ branch migration allows RuvC to scan DNA until it finds its consensus sequence, where it cleaves and resolves the cruciform DNA. The sequence is that of Holliday junction branch migration complex subunit RuvA from Geotalea daltonii (strain DSM 22248 / JCM 15807 / FRC-32) (Geobacter daltonii).